The sequence spans 284 residues: MAQLPASMRRKRAAITSIHDKPPTRKQKLANAGGWVLLVIAFVVLAVGIYGLYKVITDATVAKLEVVGSTSSVETQQVMQHVAPIIKANYFTSDLEQIRDKTLEISWVDRVVVSRAWPNGIRVRVMPRHAIARWGTGRLLSDGGDVFSEAEPTIHPELPLLHGPVSQSKMMMRRYNEINQLFHPANLRLKELYLTERMTWFMQFDSGLRIIVDQDQTMNKLQRLSHLAQSDLKPVWSKISAIDLRYRNGLSIQWKNATPPKIVNGQFVVTIDDTSIAGGTKAKP.

Over 1 to 31 (MAQLPASMRRKRAAITSIHDKPPTRKQKLAN) the chain is Cytoplasmic. The chain crosses the membrane as a helical span at residues 32-52 (AGGWVLLVIAFVVLAVGIYGL). The Periplasmic portion of the chain corresponds to 53–284 (YKVITDATVA…SIAGGTKAKP (232 aa)). The region spanning 59-128 (ATVAKLEVVG…NGIRVRVMPR (70 aa)) is the POTRA domain.

Belongs to the FtsQ/DivIB family. FtsQ subfamily. In terms of assembly, part of a complex composed of FtsB, FtsL and FtsQ.

It localises to the cell inner membrane. Functionally, essential cell division protein. May link together the upstream cell division proteins, which are predominantly cytoplasmic, with the downstream cell division proteins, which are predominantly periplasmic. May control correct divisome assembly. In Acinetobacter oleivorans (strain JCM 16667 / KCTC 23045 / DR1), this protein is Cell division protein FtsQ.